The primary structure comprises 251 residues: Bidirectional sugar transporter SWEET4 (251 aa).

Residues 1–12 are Extracellular-facing; it reads MVNATVARNIAG. Asn3 carries N-linked (GlcNAc...) asparagine glycosylation. One can recognise a MtN3/slv 1 domain in the interval 12 to 96; it reads GICGNVISLF…LAIFFFFSPT (85 aa). Residues 13-33 form a helical membrane-spanning segment; the sequence is ICGNVISLFLFLSPIPTFITI. Residues 34 to 45 lie on the Cytoplasmic side of the membrane; sequence YKKKKVEEYKAD. The chain crosses the membrane as a helical span at residues 46-66; the sequence is PYLATVLNCALWVFYGLPMVQ. Over 67-72 the chain is Extracellular; it reads PDSLLV. The chain crosses the membrane as a helical span at residues 73–93; the sequence is ITINGTGLAIELVYLAIFFFF. Topologically, residues 94 to 103 are cytoplasmic; that stretch reads SPTSRKVKVG. Residues 104-124 form a helical membrane-spanning segment; sequence LWLIGEMVFVGIVATCTLLLF. Topologically, residues 125-132 are extracellular; sequence HTHNQRSS. The helical transmembrane segment at 133–153 threads the bilayer; sequence FVGIFCVIFVSLMYIAPLTIM. A MtN3/slv 2 domain is found at 133-216; sequence FVGIFCVIFV…LILYACYYKT (84 aa). Over 154–163 the chain is Cytoplasmic; the sequence is SKVIKTKSVK. A helical transmembrane segment spans residues 164–186; the sequence is YMPFSLSLANFLNGVVWVIYALI. Over 187 to 190 the chain is Extracellular; it reads KFDL. A helical transmembrane segment spans residues 191–213; sequence FILIGNGLGTVSGAVQLILYACY. The Cytoplasmic segment spans residues 214-251; the sequence is YKTTPKDDEDEEDEENLSKVNSQLQLSGNSGQAKRVSA. The disordered stretch occupies residues 220–251; it reads DDEDEEDEENLSKVNSQLQLSGNSGQAKRVSA. A compositionally biased stretch (polar residues) spans 231 to 245; that stretch reads SKVNSQLQLSGNSGQ.

It belongs to the SWEET sugar transporter family. Forms homooligomers and heterooligomers with SWEET8 and SWEET17.

It localises to the cell membrane. Mediates both low-affinity uptake and efflux of sugar across the plasma membrane. This is Bidirectional sugar transporter SWEET4 from Arabidopsis thaliana (Mouse-ear cress).